Reading from the N-terminus, the 692-residue chain is Potassium-transporting ATPase ATP-binding subunit (692 aa).

4 helical membrane passes run 50–70 (PIMF…FLPS), 74–94 (SIPG…VLFA), 240–260 (LTLI…YLGF), and 266–286 (VLVA…LSAI). Residue D319 is the 4-aspartylphosphate intermediate of the active site. Residues D356, E360, 388-395 (FKAETRMS), and K407 contribute to the ATP site. 2 residues coordinate Mg(2+): D530 and D534. 3 helical membrane passes run 600–620 (FAII…LNIM), 628–648 (AILS…PLAM), and 672–692 (GGVI…GLFI).

It belongs to the cation transport ATPase (P-type) (TC 3.A.3) family. Type IA subfamily. The system is composed of three essential subunits: KdpA, KdpB and KdpC.

The protein localises to the cell membrane. It carries out the reaction K(+)(out) + ATP + H2O = K(+)(in) + ADP + phosphate + H(+). Functionally, part of the high-affinity ATP-driven potassium transport (or Kdp) system, which catalyzes the hydrolysis of ATP coupled with the electrogenic transport of potassium into the cytoplasm. This subunit is responsible for energy coupling to the transport system and for the release of the potassium ions to the cytoplasm. The chain is Potassium-transporting ATPase ATP-binding subunit from Bacillus thuringiensis (strain Al Hakam).